A 457-amino-acid polypeptide reads, in one-letter code: uncharacterized protein (457 aa).

This is an uncharacterized protein from Synechocystis sp. (strain ATCC 27184 / PCC 6803 / Kazusa).